Consider the following 341-residue polypeptide: D-erythrose-4-phosphate dehydrogenase (341 aa).

14–15 lines the NAD(+) pocket; that stretch reads RI. Residues 156–158, Arg202, 215–216, and Arg238 contribute to the substrate site; these read SCT and TR. The active-site Nucleophile is Cys157. NAD(+) is bound at residue Asn320.

The protein belongs to the glyceraldehyde-3-phosphate dehydrogenase family. Epd subfamily. As to quaternary structure, homotetramer.

Its subcellular location is the cytoplasm. It carries out the reaction D-erythrose 4-phosphate + NAD(+) + H2O = 4-phospho-D-erythronate + NADH + 2 H(+). Its pathway is cofactor biosynthesis; pyridoxine 5'-phosphate biosynthesis; pyridoxine 5'-phosphate from D-erythrose 4-phosphate: step 1/5. Catalyzes the NAD-dependent conversion of D-erythrose 4-phosphate to 4-phosphoerythronate. This chain is D-erythrose-4-phosphate dehydrogenase, found in Idiomarina loihiensis (strain ATCC BAA-735 / DSM 15497 / L2-TR).